Reading from the N-terminus, the 62-residue chain is Small EDRK-rich factor 1 (62 aa).

2 stretches are compositionally biased toward basic and acidic residues: residues 1 to 30 (MARG…KEDS) and 50 to 62 (AANE…TREK). The disordered stretch occupies residues 1–62 (MARGNQRELA…ERKSMQTREK (62 aa)).

This sequence belongs to the SERF family. In terms of assembly, interacts with SNCA; this interaction promotes the aggregation of SNCA.

The protein resides in the cytoplasm. It is found in the cytosol. It localises to the nucleus. Functionally, positive regulator of amyloid protein aggregation and proteotoxicity. Induces conformational changes in amyloid proteins, such as APP, HTT, and SNCA, driving them into compact formations preceding the formation of aggregates. The sequence is that of Small EDRK-rich factor 1 (SERF1) from Bos taurus (Bovine).